We begin with the raw amino-acid sequence, 230 residues long: Protein CWC15 homolog B (230 aa).

The interval 1-126 (MTTAARPTFE…DEDSDDDTAA (126 aa)) is disordered. Polar residues predominate over residues 22–34 (DLSQLSKQYSSRD). Residues 52 to 84 (EEVRSRDFRRELEERERVAVRDKNRDRPTREHT) show a composition bias toward basic and acidic residues. Over residues 102 to 124 (DADDPLTDEDADEDSDEDSDDDT) the composition is skewed to acidic residues. A coiled-coil region spans residues 121–165 (DDDTAALLAELEKIKKERAEEQVRKELEQKAEEERIRMENILSGN).

The protein belongs to the CWC15 family. As to quaternary structure, identified in the spliceosome C complex. Component of the minor spliceosome, which splices U12-type introns.

The protein resides in the nucleus. In terms of biological role, involved in pre-mRNA splicing as component of the spliceosome. The polypeptide is Protein CWC15 homolog B (cwc15-b) (Xenopus laevis (African clawed frog)).